Consider the following 516-residue polypeptide: MFGDFVEKLPQKLPQKLDIPLIINVILSIAAIALIRALAISILRQYRLRKLPLVNGVGVFESSQKAKQNFLFNAEGLLENGFTKSTKAFRMATDDSEVLILSPDYIDEIRNDKRLSLTHALAEDFLGHIPAFVNFSPQKGLNDMAGDILQKKLTQSLDLSTEAALALQEQWTDNKEWHALNAKTTMVEIVARISSRVFLGLELCRNPAWLRITADYTVNVFFGVMALKKWPKYLHPFVWRFVPEVRTVRDQIQEAVNLIQPVVEKRTAEGKSPSSRKTYSDTIQWANELANGRPYDPALLQLGFSLAAIHTTSDLLSQILYNICAYPEYIDPLREEIVTVLKEHGMTKAGLFKMKLMDSIMKESQRLKPGAMLMMRRMVLEDITLSNGVFLPRGVQIGIPTRSHFDPSFYTDPERFDGYRYVKMDDDPQREKSRHFVSTSPEHLAFGHGKHACPGRFFASQEIKIALCHILMKYEFKLADGSKPTVMKMGWVLSSDPMVQLMVRKREGVDENLLYK.

Residues 22–42 traverse the membrane as a helical segment; sequence IINVILSIAAIALIRALAISI. A heme-binding site is contributed by Cys453.

It belongs to the cytochrome P450 family. It depends on heme as a cofactor.

The protein localises to the membrane. Its pathway is secondary metabolite biosynthesis; terpenoid biosynthesis. Functionally, cytochrome P450 monooxygenase; part of the gene cluster that mediates the biosynthesis of the meroterpenoids nectripenoids A and B, as well as cochliquninone D and isocochliquninone E. The pathway probably begins with the HR-PKS ntnH that catalyzes two chain-extension steps to form a reduced triketide, which then primes the SAT domain in the NR-PKS ntnG to initiate three more cycles of extension to give a linear hexaketide corresponding to the polyketide part of nectripenoids. The FAD-dependent monooxygenase ntnJ then performs an oxidative decarboxylation at C11 of the ntnH/ntnG product, via an electrophilic aromatic hydroxylation with concomitant ipso-decarboxylation. The membrane-bound polyprenyl transferase ntnF then introduces a farnesyl group before the FAD-dependent monooxygenase ntnK functions as the first epoxidase on terminal C12'-C13' olefin, followed by a second epoxidation on C7'-C8' catalyzed by ntnA. The terpene cyclase/mutase ntnI then initiates the sequential tricyclic ring formation through protonation of the terminal epoxide and catalyzes the regioselective and stereoselective 6/6/6-tricyclic ring formation. The cytochrome P450 monooxygenase ntnM may then hydroxylate C1'. This chain is Cytochrome P450 monooxygenase ntnM, found in Nectria sp.